The chain runs to 309 residues: Haloalkane dehalogenase (309 aa).

The region spanning 37-148 (PTVLFLHGNP…FERWEDFHQR (112 aa)) is the AB hydrolase-1 domain. Asp110 serves as the catalytic Nucleophile. Glu134 acts as the Proton donor in catalysis. Catalysis depends on His278, which acts as the Proton acceptor.

Belongs to the haloalkane dehalogenase family. Type 2 subfamily. Monomer.

The catalysed reaction is 1-haloalkane + H2O = a halide anion + a primary alcohol + H(+). Catalyzes hydrolytic cleavage of carbon-halogen bonds in halogenated aliphatic compounds, leading to the formation of the corresponding primary alcohols, halide ions and protons. This Mesorhizobium japonicum (strain LMG 29417 / CECT 9101 / MAFF 303099) (Mesorhizobium loti (strain MAFF 303099)) protein is Haloalkane dehalogenase.